Reading from the N-terminus, the 398-residue chain is Cystathionine gamma-lyase (398 aa).

Phosphoserine is present on Ser50. Substrate is bound by residues Arg61, Tyr113, and Arg118. N6-(pyridoxal phosphate)lysine is present on Lys211. Glu338 contacts substrate.

Belongs to the trans-sulfuration enzymes family. As to quaternary structure, homotetramer. Interacts with CALM in a calcium-dependent manner. Pyridoxal 5'-phosphate serves as cofactor.

The protein resides in the cytoplasm. It carries out the reaction L,L-cystathionine + H2O = 2-oxobutanoate + L-cysteine + NH4(+). The enzyme catalyses L-homoserine = 2-oxobutanoate + NH4(+). It catalyses the reaction L-selenocystathionine + H2O = L-selenocysteine + 2-oxobutanoate + NH4(+). The catalysed reaction is L-cysteine + H2O = hydrogen sulfide + pyruvate + NH4(+) + H(+). It carries out the reaction L-homocysteine + H2O = 2-oxobutanoate + hydrogen sulfide + NH4(+) + H(+). It participates in amino-acid biosynthesis; L-cysteine biosynthesis; L-cysteine from L-homocysteine and L-serine: step 2/2. Catalyzes the last step in the trans-sulfuration pathway from L-methionine to L-cysteine in a pyridoxal-5'-phosphate (PLP)-dependent manner, which consists on cleaving the L,L-cystathionine molecule into L-cysteine, ammonia and 2-oxobutanoate. Part of the L-cysteine derived from the trans-sulfuration pathway is utilized for biosynthesis of the ubiquitous antioxidant glutathione. Besides its role in the conversion of L-cystathionine into L-cysteine, it utilizes L-cysteine and L-homocysteine as substrates (at much lower rates than L,L-cystathionine) to produce hydrogen sulfide (H2S). In vitro, it converts two L-cysteine molecules into lanthionine and H2S, and two L-homocysteine molecules to homolanthionine and H2S, which can be particularly relevant under conditions of severe hyperhomocysteinemia. Lanthionine and homolanthionine are structural homologs of L,L-cystathionine that differ by the absence or presence of an extra methylene group, respectively. Acts as a cysteine-protein sulfhydrase by mediating sulfhydration of target proteins: sulfhydration consists of converting -SH groups into -SSH on specific cysteine residues of target proteins such as GAPDH, PTPN1 and NF-kappa-B subunit RELA, thereby regulating their function. By generating the gasotransmitter H2S, it participates in a number of physiological processes such as vasodilation, bone protection, and inflammation. Plays an essential role in myogenesis by contributing to the biogenesis of H2S in skeletal muscle tissue. Can also accept homoserine as substrate. Catalyzes the elimination of selenocystathionine (which can be derived from the diet) to yield selenocysteine, ammonia and 2-oxobutanoate. The chain is Cystathionine gamma-lyase (Cth) from Rattus norvegicus (Rat).